A 145-amino-acid chain; its full sequence is Small ribosomal subunit protein uS19 (145 aa).

Ala2 carries the post-translational modification N-acetylalanine. A Glycyl lysine isopeptide (Lys-Gly) (interchain with G-Cter in SUMO2) cross-link involves residue Lys108.

The protein belongs to the universal ribosomal protein uS19 family. In terms of assembly, component of the small ribosomal subunit.

The protein resides in the cytoplasm. In terms of biological role, component of the small ribosomal subunit. The ribosome is a large ribonucleoprotein complex responsible for the synthesis of proteins in the cell. This is Small ribosomal subunit protein uS19 (RPS15) from Oryctolagus cuniculus (Rabbit).